A 681-amino-acid polypeptide reads, in one-letter code: MMEKGIWKDALIQSTKKLSPKLQVKNPVMLLVYVGAILATSLYFLGFFGISDEKSGYTLAIALILWFTVLFANFAEAIAEGRGRAQADSLKMARKDVLARKLKNIDDKTDVIEIASNDLKKGDIVYVLANEQIPMDGEVIEGAASVDESAITGESAPVIRESGGDRSAVTGGTTLVSDWLVVRVTAVSGESFLDKMIAMVEGASRKKTPNEIALQILLVTLSIIFLAVSATLLPFTEFASKQAGAGSAISITNVIALLVCLAPTTIGALLSSIGIAGMSRLNQANVLAMSGRAIEAAGDVDVLLLDKTGTITLGNRKASEFLPVDGVTEQELADAAQLSSIADETAEGRSIVVLAKERFDIRGRDFAEMHAEFVPFTATTRMSGIDYQENTIRKGAADAVRAYVTANGGTYPKECDAIVSKVAGAGGTPLVVVRNNKVLGVIYLKDIVKNGVKERFLDLRKMGIKTIMITGDNPMTAAAIAAEAGVDDFLAEATPEAKLELIREYQREGHLVAMTGDGTNDAPALAQADVAVAMNTGTQAAKEAGNMVDLDSSPTKLIDIVRIGKQLLMTRGALTTFSVANDLAKYFAIIPVLFYGIFPQLEALNLMGLTSPTSAILSAIIYNAVIIIILIPLSLKGVKYREMPAGKLLSRNMLIYGLGGLIAPFIAIKLIDMLLTVLGIV.

The next 4 membrane-spanning stretches (helical) occupy residues 30 to 50, 59 to 79, 216 to 236, and 255 to 275; these read LLVYVGAILATSLYFLGFFGI, LAIALILWFTVLFANFAEAIA, ILLVTLSIIFLAVSATLLPFT, and IALLVCLAPTTIGALLSSIGI. The 4-aspartylphosphate intermediate role is filled by D306. ATP is bound by residues D343, E347, 376 to 383, and K394; that span reads FTATTRMS. The Mg(2+) site is built by D517 and D521. The next 3 membrane-spanning stretches (helical) occupy residues 587-607, 615-635, and 661-681; these read FAIIPVLFYGIFPQLEALNLM, AILSAIIYNAVIIIILIPLSL, and LIAPFIAIKLIDMLLTVLGIV.

The protein belongs to the cation transport ATPase (P-type) (TC 3.A.3) family. Type IA subfamily. As to quaternary structure, the system is composed of three essential subunits: KdpA, KdpB and KdpC.

Its subcellular location is the cell membrane. The enzyme catalyses K(+)(out) + ATP + H2O = K(+)(in) + ADP + phosphate + H(+). Functionally, part of the high-affinity ATP-driven potassium transport (or Kdp) system, which catalyzes the hydrolysis of ATP coupled with the electrogenic transport of potassium into the cytoplasm. This subunit is responsible for energy coupling to the transport system and for the release of the potassium ions to the cytoplasm. The sequence is that of Potassium-transporting ATPase ATP-binding subunit from Listeria monocytogenes serotype 4b (strain CLIP80459).